The primary structure comprises 435 residues: Metacaspase-1A (435 aa).

Disordered regions lie at residues 1-46 (MQNH…APPP) and 106-129 (YQNP…VAFG). Residues 36–46 (SPQPGYGAPPP) are compositionally biased toward pro residues. Active-site residues include H231 and C287.

This sequence belongs to the peptidase C14B family.

In terms of biological role, involved in cell death (apoptosis). This chain is Metacaspase-1A (casA), found in Neosartorya fischeri (strain ATCC 1020 / DSM 3700 / CBS 544.65 / FGSC A1164 / JCM 1740 / NRRL 181 / WB 181) (Aspergillus fischerianus).